A 122-amino-acid polypeptide reads, in one-letter code: Large ribosomal subunit protein uL14 (122 aa).

This sequence belongs to the universal ribosomal protein uL14 family. As to quaternary structure, part of the 50S ribosomal subunit. Forms a cluster with proteins L3 and L19. In the 70S ribosome, L14 and L19 interact and together make contacts with the 16S rRNA in bridges B5 and B8.

In terms of biological role, binds to 23S rRNA. Forms part of two intersubunit bridges in the 70S ribosome. The sequence is that of Large ribosomal subunit protein uL14 from Alkaliphilus metalliredigens (strain QYMF).